The chain runs to 728 residues: E3 ubiquitin-protein ligase LNX (728 aa).

The RING-type zinc-finger motif lies at 45–83 (CHICLQALLDPLDTPCGHTYCTLCLTNFLVEKDFCPVDR). Positions 185–188 (NPAY) match the NPXY motif motif. The tract at residues 185–220 (NPAYVSSVEDGEPVANSSDSGRSNRTRARPFERSTM) is disordered. An interaction with MAGEB18 region spans residues 186 to 244 (PAYVSSVEDGEPVANSSDSGRSNRTRARPFERSTMRSRSFKKINRALSALRRTKSGSVV). 2 PDZ domains span residues 278–362 (SIKI…VLRE) and 385–467 (HVIL…VSRQ). The residue at position 445 (serine 445) is a Phosphoserine. The interval 481–500 (WISNGQQSPGPGERNTASKP) is disordered. PDZ domains lie at 508 to 593 (VVSV…ALEV) and 638 to 723 (DVIL…IASW).

In terms of assembly, interacts with CXADR. Interacts with MAGEB18 and MAGEF1. Interacts with the phosphotyrosine interaction domain of all isoforms of NUMB. IGSF5/JAM4 interacts with isoform 2 through the second PDZ domain, other isoforms may also interact with IGSF5/JAM4. As to expression, isoform 1 and isoform 2 are expressed in the heart. Isoform 1 is also expressed in kidney, lung and skeletal muscle while isoform 2 is also expressed in brain.

It is found in the cytoplasm. The enzyme catalyses S-ubiquitinyl-[E2 ubiquitin-conjugating enzyme]-L-cysteine + [acceptor protein]-L-lysine = [E2 ubiquitin-conjugating enzyme]-L-cysteine + N(6)-ubiquitinyl-[acceptor protein]-L-lysine.. The protein operates within protein modification; protein ubiquitination. Its function is as follows. E3 ubiquitin-protein ligase that mediates ubiquitination and subsequent proteasomal degradation of NUMB. E3 ubiquitin ligases accept ubiquitin from an E2 ubiquitin-conjugating enzyme in the form of a thioester and then directly transfers the ubiquitin to targeted substrates. Mediates ubiquitination of isoform p66 and isoform p72 of NUMB, but not that of isoform p71 or isoform p65. In terms of biological role, isoform 2 provides an endocytic scaffold for IGSF5/JAM4. In Mus musculus (Mouse), this protein is E3 ubiquitin-protein ligase LNX (Lnx1).